The following is a 334-amino-acid chain: Biotin synthase (334 aa).

In terms of domain architecture, Radical SAM core spans 55 to 285; sequence GEGGGVHACS…AHPSKIIKFA (231 aa). [4Fe-4S] cluster-binding residues include C73, C77, and C80. [2Fe-2S] cluster contacts are provided by C152, C213, and K283.

This sequence belongs to the radical SAM superfamily. Biotin synthase family. Homodimer. The cofactor is [4Fe-4S] cluster. It depends on [2Fe-2S] cluster as a cofactor.

It catalyses the reaction (4R,5S)-dethiobiotin + (sulfur carrier)-SH + 2 reduced [2Fe-2S]-[ferredoxin] + 2 S-adenosyl-L-methionine = (sulfur carrier)-H + biotin + 2 5'-deoxyadenosine + 2 L-methionine + 2 oxidized [2Fe-2S]-[ferredoxin]. It participates in cofactor biosynthesis; biotin biosynthesis; biotin from 7,8-diaminononanoate: step 2/2. Its function is as follows. Catalyzes the conversion of dethiobiotin (DTB) to biotin by the insertion of a sulfur atom into dethiobiotin via a radical-based mechanism. The sequence is that of Biotin synthase from Chlorobaculum parvum (strain DSM 263 / NCIMB 8327) (Chlorobium vibrioforme subsp. thiosulfatophilum).